Reading from the N-terminus, the 1085-residue chain is Extracellular calcium-sensing receptor (1085 aa).

A signal peptide spans 1–19 (MALYSCCWILLAFSTWCTS). Residues 20–611 (AYGPDQRAQK…KEIEFLSWTE (592 aa)) lie on the Extracellular side of the membrane. Residues 23–189 (PDQRAQKKGD…QFKSFLRTIP (167 aa)) are ligand-binding 1 (LB1). Cysteines 61 and 102 form a disulfide. 67 to 71 (RGFRW) contacts phosphate. Ca(2+) is bound by residues Ile82, Ser85, Leu88, and Leu89. Residue Asn91 is glycosylated (N-linked (GlcNAc...) asparagine). Ca(2+) is bound at residue Thr101. Residue Asn131 is glycosylated (N-linked (GlcNAc...) asparagine). Residue Thr146 coordinates Ca(2+). Positions 148, 169, and 171 each coordinate L-tryptophan. Ca(2+) contacts are provided by Ser171, Pro189, Asp191, Glu232, and Asp235. Residues 190 to 325 (NDEHQATAMA…GGTIGFGLKA (136 aa)) form a ligand-binding 2 (LB2) region. 7 disulfide bridges follow: Cys237-Cys562, Cys359-Cys396, Cys438-Cys450, Cys543-Cys563, Cys547-Cys566, Cys569-Cys583, and Cys586-Cys599. Residues Asp239 and Ser241 each coordinate spermine. Asn262 and Asn288 each carry an N-linked (GlcNAc...) asparagine glycan. Glu298 contributes to the Ca(2+) binding site. Glu298 contributes to the L-tryptophan binding site. Residue Asn401 is glycosylated (N-linked (GlcNAc...) asparagine). Residue 416-418 (RIS) participates in phosphate binding. Asn447, Asn469, and Asn489 each carry an N-linked (GlcNAc...) asparagine glycan. Tyr490 lines the Ca(2+) pocket. Asn542 carries an N-linked (GlcNAc...) asparagine glycan. Residues 543 to 613 (CSRDCLAGTR…IEFLSWTEPF (71 aa)) are cysteine-rich (CR). A Ca(2+)-binding site is contributed by Gly558. Asn595 carries N-linked (GlcNAc...) asparagine glycosylation. Residues 612-637 (PFGIALTLFAVLGIFLTAFVLGVFIK) traverse the membrane as a helical segment. Over 638–649 (FRNTPIVKATNR) the chain is Cytoplasmic. Residues 638-649 (FRNTPIVKATNR) are intracellular loop 1 (ICL1). A helical membrane pass occupies residues 650 to 669 (ELSYLLLFSLLCCFSSSLFF). The Extracellular portion of the chain corresponds to 670 to 675 (IGEPQD). A helical membrane pass occupies residues 676–699 (WTCRLRQPAFGISFVLCISCILVK). Topologically, residues 700–723 (TNRVLLVFEAKIPTSFHRKWWGLN) are cytoplasmic. Residues 700 to 723 (TNRVLLVFEAKIPTSFHRKWWGLN) form an intracellular loop 2 (ICL2) region. Residues 724–746 (LQFLLVFLCTFMQIVICAIWLNT) form a helical membrane-spanning segment. Residues 747-770 (APPSSYRNHELEDEIIFITCHEGS) lie on the Extracellular side of the membrane. A helical membrane pass occupies residues 771–790 (LMALGFLIGYTCLLAAICFF). At 791-806 (FAFKSRKLPENFNEAK) the chain is on the cytoplasmic side. Residues 791-806 (FAFKSRKLPENFNEAK) form an intracellular loop 3 (ICL3) region. The helical transmembrane segment at 807 to 829 (FITFSMLIFFIVWISFIPAYAST) threads the bilayer. The Extracellular portion of the chain corresponds to 830 to 833 (YGKF). The chain crosses the membrane as a helical span at residues 834 to 855 (VSAVEVIAILAASFGLLACIFF). Residues 856–1085 (NKVYIILFKP…STVTENMLRS (230 aa)) are Cytoplasmic-facing. The tract at residues 856–1085 (NKVYIILFKP…STVTENMLRS (230 aa)) is C-terminus. The interval 881–901 (AFKVAARATLRRSNVSRQRSS) is interaction with RNF19A. Residue Thr889 is modified to Phosphothreonine. An arginine-rich retention motif region spans residues 891 to 899 (RRSNVSRQR). Residues Ser893, Ser900, and Ser921 each carry the phosphoserine modification. Low complexity predominate over residues 893-938 (SNVSRQRSSSLGGSTGSTPSSSISSKSNSEDPFPQQQPKRQKQPQP). Disordered regions lie at residues 893–969 (SNVS…PPRC) and 1034–1058 (SQET…EEMS). The span at 950–960 (QPRPPSTPQPQ) shows a compositional bias: pro residues. Position 1068 is a phosphoserine (Ser1068).

It belongs to the G-protein coupled receptor 3 family. In terms of assembly, homodimer; disulfide-linked. Interacts with VCP. Interacts with ARRB1. Phosphorylation at Thr-889 by PKC impairs coupling with G(q)/G(11) G-proteins, while it does not affect G(i)/G(o)-coupling. Phosphorylation at Ser-893 by PKC and Ser-900 by PKA promote plasma membrane localization. In terms of processing, ubiquitinated by RNF19A; which induces proteasomal degradation.

It localises to the cell membrane. With respect to regulation, in resting state, adopts an open conformation, anion-binding promoting the inactive configuration. Upon aromatic amino acid-binding, the groove in the extracellular venus flytrap module is closed, thereby inducing the formation of a novel homodimer interface between subunits. Calcium ions stabilize the active state by enhancing homodimer interactions between membrane-proximal domains to fully activate the receptor. Upon activation, the homodimer adopts an asymmetric configuration of the 7-transmembrane region that primes one protomer for G-protein coupling. G-protein binding expands the transmembrane dimer interface; the restriction imposed by the receptor dimer, in combination with intracellular loop 2 (ICL2), enables G-protein activation by facilitating conformational transition of G-protein alpha. Coupling to different classes of G-proteins results in distinct CASR-G-protein interfaces. In terms of biological role, G-protein-coupled receptor that senses changes in the extracellular concentration of calcium ions and plays a key role in maintaining calcium homeostasis. Senses fluctuations in the circulating calcium concentration: activated by elevated circulating calcium, leading to decreased parathyroid hormone (PTH) secretion in parathyroid glands. In kidneys, acts as a key regulator of renal tubular calcium resorption. Ligand binding causes a conformation change that triggers signaling via guanine nucleotide-binding proteins (G-proteins) and modulates the activity of downstream effectors. CASR is coupled with different G(q)/G(11), G(i)/G(o)- or G(s)-classes of G-proteins depending on the context. In the parathyroid and kidney, CASR signals through G(q)/G(11) and G(i)/G(o) G-proteins: G(q)/G(11) coupling activates phospholipase C-beta, releasing diacylglycerol (DAG) and inositol 1,4,5-trisphosphate (IP3) second messengers, while G(i)/G(o) coupling mediates inhibition of adenylate cyclase activity. The G-protein-coupled receptor activity is activated by a co-agonist mechanism: aromatic amino acids, such as Trp or Phe, act concertedly with divalent cations, such as calcium or magnesium, to achieve full receptor activation. Acts as an activator of the NLRP3 inflammasome via G(i)/G(o)-mediated signaling: down-regulation of cyclic AMP (cAMP) relieving NLRP3 inhibition by cAMP. Acts as a regulator of proton-sensing receptor GPR68 in a seesaw manner: CASR-mediated signaling inhibits GPR68 signaling in response to extracellular calcium, while GPR68 inhibits CASR in presence of extracellular protons. This chain is Extracellular calcium-sensing receptor (CASR), found in Bos taurus (Bovine).